Consider the following 184-residue polypeptide: ATP synthase subunit b 1 (184 aa).

A helical membrane pass occupies residues 4-24 (LSILAALAASPAMAATGPFFS).

This sequence belongs to the ATPase B chain family. In terms of assembly, F-type ATPases have 2 components, F(1) - the catalytic core - and F(0) - the membrane proton channel. F(1) has five subunits: alpha(3), beta(3), gamma(1), delta(1), epsilon(1). F(0) has three main subunits: a(1), b(2) and c(10-14). The alpha and beta chains form an alternating ring which encloses part of the gamma chain. F(1) is attached to F(0) by a central stalk formed by the gamma and epsilon chains, while a peripheral stalk is formed by the delta and b chains.

Its subcellular location is the cell inner membrane. F(1)F(0) ATP synthase produces ATP from ADP in the presence of a proton or sodium gradient. F-type ATPases consist of two structural domains, F(1) containing the extramembraneous catalytic core and F(0) containing the membrane proton channel, linked together by a central stalk and a peripheral stalk. During catalysis, ATP synthesis in the catalytic domain of F(1) is coupled via a rotary mechanism of the central stalk subunits to proton translocation. Functionally, component of the F(0) channel, it forms part of the peripheral stalk, linking F(1) to F(0). In Cereibacter sphaeroides (strain ATCC 17025 / ATH 2.4.3) (Rhodobacter sphaeroides), this protein is ATP synthase subunit b 1.